Reading from the N-terminus, the 916-residue chain is Dual serine/threonine and tyrosine protein kinase (916 aa).

A compositionally biased stretch (basic and acidic residues) spans 1–19; the sequence is MQRDGTRSARRMDEGDRRT. Residues 1–27 form a disordered region; it reads MQRDGTRSARRMDEGDRRTGSAGRSGS. The 255-residue stretch at 641 to 895 folds into the Protein kinase domain; sequence PRIGRELGRG…PLMGIVQPML (255 aa). ATP contacts are provided by residues 647–655 and Lys-670; that span reads LGRGQYGVV. The active-site Proton acceptor is Asp-766.

It belongs to the protein kinase superfamily. Ser/Thr protein kinase family.

The protein resides in the cytoplasm. It localises to the cell membrane. Its subcellular location is the apical cell membrane. The protein localises to the basolateral cell membrane. It is found in the cell junction. The enzyme catalyses L-seryl-[protein] + ATP = O-phospho-L-seryl-[protein] + ADP + H(+). It carries out the reaction L-threonyl-[protein] + ATP = O-phospho-L-threonyl-[protein] + ADP + H(+). The catalysed reaction is L-tyrosyl-[protein] + ATP = O-phospho-L-tyrosyl-[protein] + ADP + H(+). Its function is as follows. May act as a positive regulator of ERK phosphorylation downstream of fibroblast growth factor-receptor activation. May induce both caspase-dependent apoptosis and caspase-independent cell death. May play a role in the embryonic development. The sequence is that of Dual serine/threonine and tyrosine protein kinase (dstyk) from Xenopus laevis (African clawed frog).